A 1214-amino-acid polypeptide reads, in one-letter code: Brassinosteroid LRR receptor kinase BRL3 (1214 aa).

The signal sequence occupies residues 1–29; that stretch reads MAAVRVVAPAPSVLLLVAAAVVLLHLARA. A glycan (N-linked (GlcNAc...) asparagine) is linked at Asn-61. The Cys pair 1 motif lies at 69 to 76; sequence CAWAGVSC. LRR repeat units lie at residues 103 to 127, 131 to 155, 156 to 177, 178 to 202, 204 to 228, 230 to 250, 252 to 276, 277 to 302, 303 to 325, 327 to 351, 353 to 375, 377 to 400, 401 to 427, 429 to 451, 452 to 476, 478 to 500, 502 to 525, 526 to 549, 550 to 572, 573 to 597, 599 to 621, and 650 to 673; these read LSAL…GSPR, PCAL…FLAS, CGGL…YPFP, PSLR…SLTG, HGIQ…PCTE, SVLD…FVAM, PANL…EFGG, CANL…LVDC, RRLE…TFLV, LQAL…LSIL, KTLV…SFGQ, RFLQ…VITN, ISSL…ASRC, LLEV…LCSS, LPSL…LSNC, NLES…ILFL, KLVD…CFNS, TALE…ITRC, VNLI…GFGN, LQNL…LGSC, NLIW…LAAQ, and GVLF…HLCS. N-linked (GlcNAc...) asparagine glycosylation is found at Asn-145, Asn-163, Asn-197, and Asn-210. Residues Asn-254, Asn-264, and Asn-279 are each glycosylated (N-linked (GlcNAc...) asparagine). 2 N-linked (GlcNAc...) asparagine glycosylation sites follow: Asn-400 and Asn-413. Asn-466 carries an N-linked (GlcNAc...) asparagine glycan. 2 N-linked (GlcNAc...) asparagine glycosylation sites follow: Asn-512 and Asn-524. An N-linked (GlcNAc...) asparagine glycan is attached at Asn-561. Residue Tyr-678 coordinates brassinolide. LRR repeat units lie at residues 689–712, 713–736, 738–760, and 762–786; these read NGSM…SFGN, MTYL…AFTG, KGIG…GFGC, and HFLA…QLIT. The Cys pair 2 signature appears at 799–806; it reads CGIPLNPC. Residues 829 to 849 traverse the membrane as a helical segment; it reads SVFLAVTLSVLILFSLLIIHY. Residues 913–1196 enclose the Protein kinase domain; that stretch reads FCAETLIGSG…FQVDSGSNFL (284 aa). ATP contacts are provided by residues 919–927, Lys-941, 987–989, 993–996, 1039–1044, and Asp-1057; these read IGSGGFGEV, EYM, SLDF, and DMKSSN. Residue Asp-1039 is the Proton acceptor of the active site.

The protein belongs to the protein kinase superfamily. Ser/Thr protein kinase family. In terms of tissue distribution, highly expressed in roots. Expressed at low levels in shoots.

It is found in the cell membrane. The enzyme catalyses L-seryl-[protein] + ATP = O-phospho-L-seryl-[protein] + ADP + H(+). It carries out the reaction L-threonyl-[protein] + ATP = O-phospho-L-threonyl-[protein] + ADP + H(+). In terms of biological role, may be involved in brassenosteroid (BR) perception in roots. This chain is Brassinosteroid LRR receptor kinase BRL3, found in Oryza sativa subsp. japonica (Rice).